A 345-amino-acid polypeptide reads, in one-letter code: Anthranilate phosphoribosyltransferase (345 aa).

5-phospho-alpha-D-ribose 1-diphosphate is bound by residues G86, 89-90 (GD), T94, 96-99 (NIST), 114-122 (KHGGRGVSS), and S126. G86 is a binding site for anthranilate. S98 is a binding site for Mg(2+). R172 provides a ligand contact to anthranilate. Mg(2+) is bound by residues D231 and E232.

Belongs to the anthranilate phosphoribosyltransferase family. As to quaternary structure, homodimer. Mg(2+) serves as cofactor.

The catalysed reaction is N-(5-phospho-beta-D-ribosyl)anthranilate + diphosphate = 5-phospho-alpha-D-ribose 1-diphosphate + anthranilate. It participates in amino-acid biosynthesis; L-tryptophan biosynthesis; L-tryptophan from chorismate: step 2/5. Catalyzes the transfer of the phosphoribosyl group of 5-phosphorylribose-1-pyrophosphate (PRPP) to anthranilate to yield N-(5'-phosphoribosyl)-anthranilate (PRA). The chain is Anthranilate phosphoribosyltransferase from Ralstonia pickettii (strain 12J).